We begin with the raw amino-acid sequence, 693 residues long: DNA ligase (693 aa).

NAD(+)-binding positions include 35–39, 84–85, and Glu-121; these read DAEYD and SI. The active-site N6-AMP-lysine intermediate is Lys-123. Residues Arg-144, Glu-180, Lys-297, and Lys-321 each contribute to the NAD(+) site. Residues Cys-418, Cys-421, Cys-436, and Cys-442 each coordinate Zn(2+). The BRCT domain occupies 601-690; it reads PASGSVAGLT…EQSPINNKDG (90 aa).

This sequence belongs to the NAD-dependent DNA ligase family. LigA subfamily. It depends on Mg(2+) as a cofactor. The cofactor is Mn(2+).

The enzyme catalyses NAD(+) + (deoxyribonucleotide)n-3'-hydroxyl + 5'-phospho-(deoxyribonucleotide)m = (deoxyribonucleotide)n+m + AMP + beta-nicotinamide D-nucleotide.. DNA ligase that catalyzes the formation of phosphodiester linkages between 5'-phosphoryl and 3'-hydroxyl groups in double-stranded DNA using NAD as a coenzyme and as the energy source for the reaction. It is essential for DNA replication and repair of damaged DNA. This is DNA ligase from Azoarcus sp. (strain BH72).